An 89-amino-acid polypeptide reads, in one-letter code: NADH-ubiquinone oxidoreductase chain 4L (89 aa).

Transmembrane regions (helical) follow at residues 1 to 21, 22 to 42, and 55 to 75; these read MNFS…NRKN, IILM…LILI, and FAIY…GILV.

The protein belongs to the complex I subunit 4L family.

The protein resides in the mitochondrion membrane. The enzyme catalyses a ubiquinone + NADH + 5 H(+)(in) = a ubiquinol + NAD(+) + 4 H(+)(out). Functionally, core subunit of the mitochondrial membrane respiratory chain NADH dehydrogenase (Complex I) that is believed to belong to the minimal assembly required for catalysis. Complex I functions in the transfer of electrons from NADH to the respiratory chain. The immediate electron acceptor for the enzyme is believed to be ubiquinone. The sequence is that of NADH-ubiquinone oxidoreductase chain 4L (nd4L) from Talaromyces marneffei (Penicillium marneffei).